Here is a 51-residue protein sequence, read N- to C-terminus: Small, acid-soluble spore protein K (51 aa).

Residues 1-51 are disordered; sequence MRNKAKGFPNPISFNGNKANNADEHASKRPDGTTRDRPQERMRSSNHFNSL. Over residues 21-43 the composition is skewed to basic and acidic residues; it reads NADEHASKRPDGTTRDRPQERMR.

This sequence belongs to the SspK family.

The protein localises to the spore core. This chain is Small, acid-soluble spore protein K, found in Shouchella clausii (strain KSM-K16) (Alkalihalobacillus clausii).